Consider the following 319-residue polypeptide: Acetyl-coenzyme A carboxylase carboxyl transferase subunit alpha (319 aa).

The region spanning 35–296 (NIDEEVHRLR…KAQLLADLAD (262 aa)) is the CoA carboxyltransferase C-terminal domain.

It belongs to the AccA family. Acetyl-CoA carboxylase is a heterohexamer composed of biotin carboxyl carrier protein (AccB), biotin carboxylase (AccC) and two subunits each of ACCase subunit alpha (AccA) and ACCase subunit beta (AccD).

Its subcellular location is the cytoplasm. It carries out the reaction N(6)-carboxybiotinyl-L-lysyl-[protein] + acetyl-CoA = N(6)-biotinyl-L-lysyl-[protein] + malonyl-CoA. Its pathway is lipid metabolism; malonyl-CoA biosynthesis; malonyl-CoA from acetyl-CoA: step 1/1. In terms of biological role, component of the acetyl coenzyme A carboxylase (ACC) complex. First, biotin carboxylase catalyzes the carboxylation of biotin on its carrier protein (BCCP) and then the CO(2) group is transferred by the carboxyltransferase to acetyl-CoA to form malonyl-CoA. This Klebsiella pneumoniae (strain 342) protein is Acetyl-coenzyme A carboxylase carboxyl transferase subunit alpha.